A 361-amino-acid chain; its full sequence is tRNA-specific 2-thiouridylase MnmA (361 aa).

Residues 11-18 and M37 each bind ATP; that span reads GMSGGVDS. C106 (nucleophile) is an active-site residue. C106 and C202 form a disulfide bridge. ATP is bound at residue G130. The interval 152–154 is interaction with tRNA; sequence KDQ. C202 functions as the Cysteine persulfide intermediate in the catalytic mechanism. Positions 308-309 are interaction with tRNA; sequence RY.

The protein belongs to the MnmA/TRMU family.

It is found in the cytoplasm. The catalysed reaction is S-sulfanyl-L-cysteinyl-[protein] + uridine(34) in tRNA + AH2 + ATP = 2-thiouridine(34) in tRNA + L-cysteinyl-[protein] + A + AMP + diphosphate + H(+). Catalyzes the 2-thiolation of uridine at the wobble position (U34) of tRNA, leading to the formation of s(2)U34. This chain is tRNA-specific 2-thiouridylase MnmA, found in Clostridium botulinum (strain Alaska E43 / Type E3).